The following is a 314-amino-acid chain: Bifunctional pinoresinol-lariciresinol reductase 3 (314 aa).

NADP(+)-binding positions include glycine 11 to glycine 17, arginine 36, and lysine 45. Lysine 138 acts as the Proton acceptor in catalysis. Arginine 142 is a binding site for NADP(+). Position 272 (histidine 272) interacts with substrate.

It belongs to the NmrA-type oxidoreductase family. Isoflavone reductase subfamily. Dimer.

The enzyme catalyses (-)-lariciresinol + NADP(+) = (-)-pinoresinol + NADPH + H(+). It catalyses the reaction (+)-secoisolariciresinol + NADP(+) = (-)-lariciresinol + NADPH + H(+). Functionally, reductase involved in lignan biosynthesis. Catalyzes the enantioselective sequential conversion of (-)-pinoresinol into (-)-lariciresinol and of (-)-lariciresinol into (+)-secoisolariciresinol. Abstracts the 4R-hydride from the NADPH cofactor during catalysis. The protein is Bifunctional pinoresinol-lariciresinol reductase 3 of Thuja plicata (Western red-cedar).